A 314-amino-acid chain; its full sequence is MSDTPKRCGFAAVIGSPNAGKSTLVNALVGEKVTIVTHKVQTTRFAVRGVALAGETQIVLVDTPGVFAPKTRLDKSMVAAAWSGAGEADTIMHVVDAGARARMEHGGAKSGDSRMVEDDDRVTEGLKKTEQKAILVLNKVDLMPRDQLLAMSQELYETGVYSEVFMISAKTGSGVPQLREFIAGLMPEGVWHYPADQVADLPARILAAEITREKVYLRLHEELPYASMVETEVWKKLRDGSLRIEQSIIVERETQKPIVLGKGGSAVKSIGEASRKELEEVLGCKVHLFLNVKVDAKWMARRSHYKDVGLDFDV.

An Era-type G domain is found at 7–188 (RCGFAAVIGS…REFIAGLMPE (182 aa)). The segment at 15–22 (GSPNAGKS) is G1. 15-22 (GSPNAGKS) is a GTP binding site. A G2 region spans residues 41 to 45 (QTTRF). The G3 stretch occupies residues 62–65 (DTPG). GTP contacts are provided by residues 62–66 (DTPGV) and 138–141 (NKVD). Residues 138 to 141 (NKVD) are G4. The tract at residues 167 to 169 (ISA) is G5. Residues 219-296 (LHEELPYASM…HLFLNVKVDA (78 aa)) form the KH type-2 domain.

It belongs to the TRAFAC class TrmE-Era-EngA-EngB-Septin-like GTPase superfamily. Era GTPase family. In terms of assembly, monomer.

It is found in the cytoplasm. The protein localises to the cell inner membrane. Its function is as follows. An essential GTPase that binds both GDP and GTP, with rapid nucleotide exchange. Plays a role in 16S rRNA processing and 30S ribosomal subunit biogenesis and possibly also in cell cycle regulation and energy metabolism. The polypeptide is GTPase Era (Maricaulis maris (strain MCS10) (Caulobacter maris)).